A 443-amino-acid polypeptide reads, in one-letter code: ATP-dependent protease ATPase subunit HslU (443 aa).

Residues isoleucine 18, 60-65 (GVGKTE), aspartate 256, glutamate 321, and arginine 393 each bind ATP.

Belongs to the ClpX chaperone family. HslU subfamily. As to quaternary structure, a double ring-shaped homohexamer of HslV is capped on each side by a ring-shaped HslU homohexamer. The assembly of the HslU/HslV complex is dependent on binding of ATP.

Its subcellular location is the cytoplasm. ATPase subunit of a proteasome-like degradation complex; this subunit has chaperone activity. The binding of ATP and its subsequent hydrolysis by HslU are essential for unfolding of protein substrates subsequently hydrolyzed by HslV. HslU recognizes the N-terminal part of its protein substrates and unfolds these before they are guided to HslV for hydrolysis. The protein is ATP-dependent protease ATPase subunit HslU of Vibrio cholerae serotype O1 (strain ATCC 39315 / El Tor Inaba N16961).